We begin with the raw amino-acid sequence, 34 residues long: Cytochrome b6-f complex subunit 7 (34 aa).

A helical transmembrane segment spans residues 9–29; the sequence is ALLSFGLIFVGWALGALLLKI.

Belongs to the PetM family. As to quaternary structure, the 4 large subunits of the cytochrome b6-f complex are cytochrome b6, subunit IV (17 kDa polypeptide, PetD), cytochrome f and the Rieske protein, while the 4 small subunits are PetG, PetL, PetM and PetN. The complex functions as a dimer.

It localises to the cellular thylakoid membrane. Functionally, component of the cytochrome b6-f complex, which mediates electron transfer between photosystem II (PSII) and photosystem I (PSI), cyclic electron flow around PSI, and state transitions. The protein is Cytochrome b6-f complex subunit 7 of Nostoc sp. (strain PCC 7120 / SAG 25.82 / UTEX 2576).